The chain runs to 548 residues: Glucose-6-phosphate isomerase (548 aa).

The active-site Proton donor is the Glu353. Active-site residues include His384 and Lys512.

This sequence belongs to the GPI family.

Its subcellular location is the cytoplasm. It carries out the reaction alpha-D-glucose 6-phosphate = beta-D-fructose 6-phosphate. The protein operates within carbohydrate biosynthesis; gluconeogenesis. It functions in the pathway carbohydrate degradation; glycolysis; D-glyceraldehyde 3-phosphate and glycerone phosphate from D-glucose: step 2/4. In terms of biological role, catalyzes the reversible isomerization of glucose-6-phosphate to fructose-6-phosphate. The sequence is that of Glucose-6-phosphate isomerase from Pseudoalteromonas translucida (strain TAC 125).